The primary structure comprises 195 residues: Imidazoleglycerol-phosphate dehydratase (195 aa).

Belongs to the imidazoleglycerol-phosphate dehydratase family.

The protein resides in the cytoplasm. The enzyme catalyses D-erythro-1-(imidazol-4-yl)glycerol 3-phosphate = 3-(imidazol-4-yl)-2-oxopropyl phosphate + H2O. It participates in amino-acid biosynthesis; L-histidine biosynthesis; L-histidine from 5-phospho-alpha-D-ribose 1-diphosphate: step 6/9. The chain is Imidazoleglycerol-phosphate dehydratase from Campylobacter curvus (strain 525.92).